Consider the following 601-residue polypeptide: NAD(+)--arginine ADP-ribosyltransferase Chelt (601 aa).

An N-terminal signal peptide occupies residues 1 to 18; sequence MKTIISLIFIMFPLFVSA. NAD(+) contacts are provided by residues 26-43 and Glu-130; that span reads ADSR…LYPR. Glu-130 is a catalytic residue. Cys-205 and Cys-220 are oxidised to a cystine.

The protein belongs to the enterotoxin A family.

It localises to the secreted. The catalysed reaction is L-arginyl-[protein] + NAD(+) = N(omega)-(ADP-D-ribosyl)-L-arginyl-[protein] + nicotinamide + H(+). Functionally, a probable mono(ADP-ribosyl)transferase, it may ADP-ribosylate Arg in target protein(s). Upon expression in yeast cells causes cell death. This Vibrio cholerae protein is NAD(+)--arginine ADP-ribosyltransferase Chelt.